Here is a 296-residue protein sequence, read N- to C-terminus: 4-hydroxy-tetrahydrodipicolinate synthase (296 aa).

T49 is a pyruvate binding site. Y137 functions as the Proton donor/acceptor in the catalytic mechanism. The active-site Schiff-base intermediate with substrate is the K165. Residue I208 coordinates pyruvate.

Belongs to the DapA family. Homotetramer; dimer of dimers.

It is found in the cytoplasm. It catalyses the reaction L-aspartate 4-semialdehyde + pyruvate = (2S,4S)-4-hydroxy-2,3,4,5-tetrahydrodipicolinate + H2O + H(+). Its pathway is amino-acid biosynthesis; L-lysine biosynthesis via DAP pathway; (S)-tetrahydrodipicolinate from L-aspartate: step 3/4. Catalyzes the condensation of (S)-aspartate-beta-semialdehyde [(S)-ASA] and pyruvate to 4-hydroxy-tetrahydrodipicolinate (HTPA). This Ehrlichia canis (strain Jake) protein is 4-hydroxy-tetrahydrodipicolinate synthase.